Here is a 328-residue protein sequence, read N- to C-terminus: C-type lectin domain family 11 member A (328 aa).

Positions 1–21 (MQAAWLLGALLVPHLLSFGHG) are cleaved as a signal peptide. Residues 58–111 (PTGVGNKDNLAENSEGKEVWEATETQGEEEEEETTTTPSSSPTPFPSPSPTSED) form a disordered region. Residues 188–325 (LGHKCFLLSR…CERRLYFVCE (138 aa)) form the C-type lectin domain. Disulfide bonds link Cys-209-Cys-324 and Cys-301-Cys-316.

Post-translationally, O-glycosylated. Probably sulfated on the O-glycans.

The protein resides in the cytoplasm. Its subcellular location is the secreted. In terms of biological role, promotes osteogenesis by stimulating the differentiation of mesenchymal progenitors into mature osteoblasts. Important for repair and maintenance of adult bone. This Rattus norvegicus (Rat) protein is C-type lectin domain family 11 member A (Clec11a).